The sequence spans 919 residues: Kinesin-like protein KIN-UA (919 aa).

A disordered region spans residues 1–68 (MSTTSGTGGV…SGGGGDAGVP (68 aa)). Low complexity predominate over residues 15–51 (GTQRSSLRTQSSASTSSGGQKASVKSKSVLRKSSPAA). Positions 52–66 (LGGGSSKSGGGGDAG) are enriched in gly residues. One can recognise a Kinesin motor domain in the interval 70–412 (RVRVAVRLRP…IMFGQRAMKV (343 aa)). 155–162 (GQTGTGKT) contributes to the ATP binding site. The segment at 286–305 (TRDGLSSESNGNSHMTKSLK) is disordered. Residues 291 to 301 (SSESNGNSHMT) are compositionally biased toward polar residues. Residues 382–390 (RTSLVITIG) carry the D-BOX motif. 2 coiled-coil regions span residues 428–492 (SRRL…SIKK) and 530–621 (ALEE…LEQH). ARM repeat units lie at residues 650 to 689 (KPPV…NLAA), 691 to 731 (EANQ…NLAM), 733 to 773 (ETNQ…NLCG), and 775 to 814 (DKLQ…NFAK).

The protein belongs to the TRAFAC class myosin-kinesin ATPase superfamily. Kinesin family. Ungrouped subfamily. In terms of assembly, interacts (via C-terminus) with NEK5. Expressed in leaves, guard cells, trichomes, vascular tissues, stele of the root tip region and columella cells. Highest expression detected in guard cells.

Its subcellular location is the cytoplasm. The protein resides in the cytoskeleton. This chain is Kinesin-like protein KIN-UA, found in Arabidopsis thaliana (Mouse-ear cress).